The following is a 113-amino-acid chain: Venom protein 184 (113 aa).

The N-terminal stretch at 1 to 21 (MKTTLIFCILGIVIPTAVVSS) is a signal peptide.

Contains 3 disulfide bonds. Expressed by the venom gland.

Its subcellular location is the secreted. The sequence is that of Venom protein 184 from Lychas mucronatus (Chinese swimming scorpion).